The following is a 231-amino-acid chain: 2,3-bisphosphoglycerate-dependent phosphoglycerate mutase (231 aa).

Substrate contacts are provided by residues 8–15 (RHGESEWN), 21–22 (TG), arginine 60, 87–90 (ERHY), lysine 98, 114–115 (RR), and 183–184 (GN). Histidine 9 serves as the catalytic Tele-phosphohistidine intermediate. Residue glutamate 87 is the Proton donor/acceptor of the active site.

The protein belongs to the phosphoglycerate mutase family. BPG-dependent PGAM subfamily.

The enzyme catalyses (2R)-2-phosphoglycerate = (2R)-3-phosphoglycerate. Its pathway is carbohydrate degradation; glycolysis; pyruvate from D-glyceraldehyde 3-phosphate: step 3/5. In terms of biological role, catalyzes the interconversion of 2-phosphoglycerate and 3-phosphoglycerate. This Streptococcus equi subsp. zooepidemicus (strain H70) protein is 2,3-bisphosphoglycerate-dependent phosphoglycerate mutase.